The following is a 766-amino-acid chain: Ribonuclease Z, mitochondrial (766 aa).

A mitochondrion-targeting transit peptide spans 1 to 25; that stretch reads MYLVKSAGSPIYRTLRTLTTSNLMA.

This sequence belongs to the RNase Z family. Homodimer. Requires Zn(2+) as cofactor.

It localises to the nucleus. It is found in the mitochondrion. It catalyses the reaction Endonucleolytic cleavage of RNA, removing extra 3' nucleotides from tRNA precursor, generating 3' termini of tRNAs. A 3'-hydroxy group is left at the tRNA terminus and a 5'-phosphoryl group is left at the trailer molecule.. Functionally, zinc phosphodiesterase, which displays some tRNA 3'-processing endonuclease activity of nuclear and mitochondrial pre-tRNA. Probably involved in tRNA maturation, by removing a 3'-trailer from precursor tRNA. May participate in tRNA processing in the developing embryo. This chain is Ribonuclease Z, mitochondrial, found in Drosophila melanogaster (Fruit fly).